The primary structure comprises 1034 residues: Sodium bicarbonate cotransporter 3 (1034 aa).

2 disordered regions span residues 1–31 and 53–99; these read MEAD…KTSS and HVPF…SQRV. Residues 1–476 are Extracellular-facing; it reads MEADGAGEQM…DFKDALSLQC (476 aa). Residues serine 57, serine 60, serine 89, and serine 155 each carry the phosphoserine modification. Residues 60–77 show a composition bias toward basic residues; that stretch reads SRRRHKHRGHKHHHRRRK. Positions 78–90 are enriched in basic and acidic residues; the sequence is DKDSDKEDGRESP. The N-linked (GlcNAc...) asparagine glycan is linked to asparagine 176. 6 positions are modified to phosphoserine: serine 238, serine 250, serine 260, methionine 263, serine 268, and serine 271. The segment covering 250–260 has biased composition (polar residues); sequence SAPGNLDNSKS. The segment at 250 to 276 is disordered; it reads SAPGNLDNSKSGEMKGNGSGGSRENST. Asparagine 274 is a glycosylation site (N-linked (GlcNAc...) asparagine). Phosphoserine occurs at positions 275 and 424. The chain crosses the membrane as a helical span at residues 477–497; it reads LASILFLYCACMSPVITFGGL. At 498-505 the chain is on the cytoplasmic side; it reads LGEATEGR. A helical transmembrane segment spans residues 506–526; the sequence is ISAIESLFGASLTGIAYSLFA. At 527–563 the chain is on the extracellular side; it reads GQPLTILGSTGPVLVFEKILFKFCRDYHLSYLSLRTS. A helical transmembrane segment spans residues 564–584; that stretch reads IGLWTSFLCIVLVATDASSLV. The Cytoplasmic portion of the chain corresponds to 585 to 593; it reads CYITRFTEE. Residues 594–614 traverse the membrane as a helical segment; it reads AFAALICIIFIYEALEKLFHL. The Extracellular segment spans residues 615–685; sequence GEIYAFNMHN…MFVGSACGPH (71 aa). A disulfide bridge links cysteine 634 with cysteine 636. 3 N-linked (GlcNAc...) asparagine glycosylation sites follow: asparagine 644, asparagine 654, and asparagine 664. A disulfide bridge connects residues cysteine 670 and cysteine 682. Residues 686–706 traverse the membrane as a helical segment; sequence GPYVPDVLFWCVVLFFTTFFL. The Cytoplasmic segment spans residues 707-729; the sequence is SSFLKQFKTKGYFPTKVRSTISD. The helical transmembrane segment at 730–750 threads the bilayer; that stretch reads FAVFLTIVIMVAIDYLVGIPS. Topologically, residues 751–776 are extracellular; sequence PKLHVPEKFEPTDPSRGWIISPLGDN. A helical membrane pass occupies residues 777-797; it reads PWWTLLIAAVPALLCTILIFM. The Cytoplasmic segment spans residues 798-812; that stretch reads DQQITAVIINRKEHK. The chain crosses the membrane as a helical span at residues 813 to 833; sequence LKFIPMPVLYGVFLYMGVSSL. The segment at 815-915 is essential for cell membrane localization and transport activity; it reads FIPMPVLYGV…MDLCFTKREL (101 aa). Over 834-876 the chain is Extracellular; it reads KGIQFFDRIKLFGMPAKHQPDLIYLRYVPLWKVHVFTVVQLTC. Residues 877-897 traverse the membrane as a helical segment; sequence LVLLWVIKASAAAVVFPMMVL. The Cytoplasmic portion of the chain corresponds to 898–1034; sequence ALVFVRKLMD…KKYMDAETSL (137 aa). The interval 918–920 is CA2-binding; that stretch reads LDD. Residues 926–946 are disordered; the sequence is KKKKEDDKKKKEKEEAERMLQ. A Phosphothreonine modification is found at threonine 951. Phosphoserine is present on residues serine 960 and serine 1033. The short motif at 1031–1034 is the PDZ-binding element; that stretch reads ETSL.

It belongs to the anion exchanger (TC 2.A.31) family. Forms a complex with ATP6V1B1 and NHERF1/EBP50. Interacts in a pH dependent-manner with CA2/carbonic anhydrase 2. Interacts with CFTR through NHERF1/EBP50. Interacts with USH1C. In terms of tissue distribution, expressed in the spiral ligament throughout the cochlea and in photoreceptors of the outer plexiform layer of the retina (at protein level).

The protein localises to the basolateral cell membrane. Its subcellular location is the apical cell membrane. It is found in the cell projection. It localises to the stereocilium. The protein resides in the cell membrane. It catalyses the reaction hydrogencarbonate(in) + Na(+)(in) = hydrogencarbonate(out) + Na(+)(out). Its activity is regulated as follows. Activity is inhibited by 4,4'-di-isothiocyanatostilbene-2,2'-disulfonic acid (DIDS - an inhibitor of several anion channels and transporters). Functionally, electroneutral sodium- and bicarbonate-dependent cotransporter with a Na(+):HCO3(-) 1:1 stoichiometry. Mediates the sodium-dependent bicarbonate transport important for pH recovery after acid load as well as for regulation of steady-state pH in the duodenum and vascular smooth muscle cells. Plays a key role in macrophage acidification, mediating bicarbonate import into the cytoplasm which is crucial for net acid extrusion and maintenance of cytoplasmic pH during phagocytosis. Provides cellular bicarbonate for de novo purine and pyrimidine synthesis and is a key mediator of de novo nucleotide synthesis downstream of mTORC1 signaling in proliferating cells. May be involved in maintaining locomotor activity, exploratory behavior, and hearing. This Mus musculus (Mouse) protein is Sodium bicarbonate cotransporter 3 (Slc4a7).